The chain runs to 642 residues: Chaperone protein DnaK (642 aa).

Residue T200 is modified to Phosphothreonine; by autocatalysis. Low complexity predominate over residues 603 to 623; it reads AAAAEQGGNADAASGNAQASK. The disordered stretch occupies residues 603-627; the sequence is AAAAEQGGNADAASGNAQASKAADD.

It belongs to the heat shock protein 70 family.

Its function is as follows. Acts as a chaperone. The polypeptide is Chaperone protein DnaK (Xanthomonas campestris pv. campestris (strain B100)).